The primary structure comprises 570 residues: Probable electron transfer flavoprotein-ubiquinone oxidoreductase (570 aa).

13 to 27 (VVIVGAGPAGLSAAI) provides a ligand contact to FAD. Positions 515, 539, 542, and 545 each coordinate [4Fe-4S] cluster. Residues 530–559 (KRFQINAANCVHCKTCDIKDPSQNITWVTP) form the 4Fe-4S ferredoxin-type domain.

Requires [4Fe-4S] cluster as cofactor. FAD is required as a cofactor.

The catalysed reaction is a ubiquinone + reduced [electron-transfer flavoprotein] = a ubiquinol + oxidized [electron-transfer flavoprotein] + H(+). In terms of biological role, accepts electrons from ETF and reduces ubiquinone. The chain is Probable electron transfer flavoprotein-ubiquinone oxidoreductase (etfD) from Acinetobacter baylyi (strain ATCC 33305 / BD413 / ADP1).